The sequence spans 444 residues: 23S rRNA (uracil(1939)-C(5))-methyltransferase RlmD (444 aa).

The TRAM domain maps to 5–67; the sequence is RSRIDRTPFQ…RHFDEARTVE (63 aa). Residues C80, C86, C89, and C168 each coordinate [4Fe-4S] cluster. Positions 276, 305, 310, 326, 353, and 374 each coordinate S-adenosyl-L-methionine. The Nucleophile role is filled by C400.

This sequence belongs to the class I-like SAM-binding methyltransferase superfamily. RNA M5U methyltransferase family. RlmD subfamily.

It catalyses the reaction uridine(1939) in 23S rRNA + S-adenosyl-L-methionine = 5-methyluridine(1939) in 23S rRNA + S-adenosyl-L-homocysteine + H(+). Its function is as follows. Catalyzes the formation of 5-methyl-uridine at position 1939 (m5U1939) in 23S rRNA. In Stenotrophomonas maltophilia (strain K279a), this protein is 23S rRNA (uracil(1939)-C(5))-methyltransferase RlmD.